Consider the following 158-residue polypeptide: Large ribosomal subunit protein eL24 (158 aa).

The span at 98–146 shows a compositional bias: basic and acidic residues; the sequence is LDASHKKAEAEKAVRELKQKKANDIEKKRADRKLQGKDVKAAKKAETKK. The interval 98–158 is disordered; it reads LDASHKKAEA…QPVGAKGGKK (61 aa).

It belongs to the eukaryotic ribosomal protein eL24 family.

This chain is Large ribosomal subunit protein eL24 (RPL24), found in Tetrahymena thermophila (strain SB210).